The primary structure comprises 389 residues: Chalcone synthase 1 (389 aa).

The active site involves Cys164.

Belongs to the thiolase-like superfamily. Chalcone/stilbene synthases family.

It catalyses the reaction (E)-4-coumaroyl-CoA + 3 malonyl-CoA + 3 H(+) = 2',4,4',6'-tetrahydroxychalcone + 3 CO2 + 4 CoA. It participates in secondary metabolite biosynthesis; flavonoid biosynthesis. Its function is as follows. The primary product of this enzyme is 4,2',4',6'-tetrahydroxychalcone (also termed naringenin-chalcone or chalcone) which can under specific conditions spontaneously isomerize into naringenin. The sequence is that of Chalcone synthase 1 (CHS1) from Daucus carota (Wild carrot).